The sequence spans 273 residues: Outer surface protein A (273 aa).

A signal peptide spans 1–16; sequence MKKYLLGIGLILALIA. A lipid anchor (N-palmitoyl cysteine) is attached at cysteine 17. The S-diacylglycerol cysteine moiety is linked to residue cysteine 17.

This sequence belongs to the OspA lipoprotein family.

Its subcellular location is the cell outer membrane. It localises to the cell surface. In Borreliella burgdorferi (Lyme disease spirochete), this protein is Outer surface protein A.